The sequence spans 288 residues: 4-diphosphocytidyl-2-C-methyl-D-erythritol kinase (288 aa).

Residue Lys13 is part of the active site. An ATP-binding site is contributed by 97–107 (PMGGGIGGGSS). Residue Asp139 is part of the active site.

This sequence belongs to the GHMP kinase family. IspE subfamily.

The enzyme catalyses 4-CDP-2-C-methyl-D-erythritol + ATP = 4-CDP-2-C-methyl-D-erythritol 2-phosphate + ADP + H(+). It participates in isoprenoid biosynthesis; isopentenyl diphosphate biosynthesis via DXP pathway; isopentenyl diphosphate from 1-deoxy-D-xylulose 5-phosphate: step 3/6. Functionally, catalyzes the phosphorylation of the position 2 hydroxy group of 4-diphosphocytidyl-2C-methyl-D-erythritol. This chain is 4-diphosphocytidyl-2-C-methyl-D-erythritol kinase, found in Saccharophagus degradans (strain 2-40 / ATCC 43961 / DSM 17024).